Reading from the N-terminus, the 564-residue chain is Myb-like protein F (564 aa).

3 disordered regions span residues 22-107 (YNNS…NYNN), 122-203 (NYNN…YNGG), and 310-410 (NYNN…TKKY). Residues 23 to 79 (NNSNHYNDNNDNNNNNNNNNNDNNNNDNNNNNNNNNNSIINNESDNESNGTSNNYND) are compositionally biased toward low complexity. The segment covering 82–96 (NDNHHHHQDDEHHGN) has biased composition (basic and acidic residues). Low complexity-rich tracts occupy residues 97–107 (GNDNDNENYNN), 135–173 (EINSNHNNDNNNNTNNNDNSSNNNNNNNNSNNNNNNNSK), 193–203 (NNNNNNKYNGG), and 310–364 (NYNN…NSSN). Residues 365 to 409 (KEYKEKEYKEKEYKEKEFKESKDSSLKRKSSSDDDGDDSGRDTKK) show a composition bias toward basic and acidic residues. Residues 412–464 (PGRTVWTLEEEELYKEVFNHYGKNWKKIKTHFPDKSKSQVTSHGQYLIKINKL) form the SANT domain. Positions 519–556 (NNENTNDNNNHNNNNYNDNNNNSNNNNNFNNSNNNNTN) are enriched in low complexity. The segment at 519–564 (NNENTNDNNNHNNNNYNDNNNNSNNNNNFNNSNNNNTNKFIDEDDD) is disordered.

The protein localises to the nucleus. The polypeptide is Myb-like protein F (mybF) (Dictyostelium discoideum (Social amoeba)).